The chain runs to 242 residues: Probable transcriptional regulatory protein Bxeno_A1185 (242 aa).

The protein belongs to the TACO1 family.

It is found in the cytoplasm. In Paraburkholderia xenovorans (strain LB400), this protein is Probable transcriptional regulatory protein Bxeno_A1185.